The following is a 262-amino-acid chain: uncharacterized protein (262 aa).

The next 6 helical transmembrane spans lie at 21–41 (ILITYFLCWAGFLFSFSVGKF), 94–114 (IVSNFMGCLIIMFALGALAYL), 139–159 (LLILFIFTVINPLTGLIGVNL), 164–184 (LIAVLPHGFFEFFGFATAVVV), 205–225 (IVILIACSFIFIFIAGMLEPI), and 240–260 (LLAAFATGYKNLFLYLISMLF).

The protein resides in the cell membrane. This is an uncharacterized protein from Methanocaldococcus jannaschii (strain ATCC 43067 / DSM 2661 / JAL-1 / JCM 10045 / NBRC 100440) (Methanococcus jannaschii).